A 468-amino-acid chain; its full sequence is 3-isopropylmalate dehydratase large subunit (468 aa).

The [4Fe-4S] cluster site is built by Cys347, Cys408, and Cys411.

The protein belongs to the aconitase/IPM isomerase family. LeuC type 1 subfamily. Heterodimer of LeuC and LeuD. [4Fe-4S] cluster serves as cofactor.

It catalyses the reaction (2R,3S)-3-isopropylmalate = (2S)-2-isopropylmalate. Its pathway is amino-acid biosynthesis; L-leucine biosynthesis; L-leucine from 3-methyl-2-oxobutanoate: step 2/4. In terms of biological role, catalyzes the isomerization between 2-isopropylmalate and 3-isopropylmalate, via the formation of 2-isopropylmaleate. The sequence is that of 3-isopropylmalate dehydratase large subunit from Methylobacillus flagellatus (strain ATCC 51484 / DSM 6875 / VKM B-1610 / KT).